Consider the following 487-residue polypeptide: Probable cytochrome P450 513B1 (487 aa).

The chain crosses the membrane as a helical span at residues 1–18; sequence MNLLVLSVILAIIIYLIF. Cys433 contacts heme.

This sequence belongs to the cytochrome P450 family. Requires heme as cofactor.

Its subcellular location is the membrane. The sequence is that of Probable cytochrome P450 513B1 (cyp513B1) from Dictyostelium discoideum (Social amoeba).